The primary structure comprises 56 residues: uncharacterized protein (56 aa).

This is an uncharacterized protein from Autographa californica nuclear polyhedrosis virus (AcMNPV).